The chain runs to 381 residues: cAMP-dependent protein kinase type I-alpha regulatory subunit (381 aa).

M1 is modified (N-acetylmethionine). The dimerization and phosphorylation stretch occupies residues 1-135; the sequence is MESGSTAASE…AALAKAIEKN (135 aa). S3 carries the phosphoserine modification. Positions 64-96 are disordered; it reads QIQNLQKAGTRTDSREDEISPPPPNPVVKGRRR. T75 carries the post-translational modification Phosphothreonine. Phosphoserine occurs at positions 77 and 83. The Pseudophosphorylation motif motif lies at 96–100; it reads RRGAI. S101 carries the post-translational modification Phosphoserine. Residues 137–254, E202, R211, 255–381, E326, and R335 contribute to the 3',5'-cyclic AMP site; these read LFSH…SKVS and ILES…SLSV. Position 258 is a phosphoserine (S258).

The protein belongs to the cAMP-dependent kinase regulatory chain family. As to quaternary structure, the inactive holoenzyme is composed of two regulatory chains and two catalytic chains. Activation by cAMP releases the two active catalytic monomers and the regulatory dimer. Interacts with PRKACA and PRKACB. PRKAR1A also interacts with RFC2; the complex may be involved in cell survival. Interacts with AKAP4. Interacts with RARA; the interaction occurs in the presence of cAMP or FSH and regulates RARA transcriptional activity. Interacts with the phosphorylated form of PJA2. Interacts with CBFA2T3. Interacts with PRKX; regulates this cAMP-dependent protein kinase. Interacts with smAKAP; this interaction may target PRKAR1A to the plasma membrane. Interacts with AICDA. In terms of processing, the pseudophosphorylation site binds to the substrate-binding region of the catalytic chain, resulting in the inhibition of its activity.

The protein resides in the cell membrane. Functionally, regulatory subunit of the cAMP-dependent protein kinases involved in cAMP signaling in cells. In Pongo abelii (Sumatran orangutan), this protein is cAMP-dependent protein kinase type I-alpha regulatory subunit (PRKAR1A).